Consider the following 1155-residue polypeptide: Alpha,alpha-trehalose-phosphate synthase [UDP-forming] 1 (1155 aa).

A disordered region spans residues 56–94 (LQRRRSVSSRGGSLRGSMDSLNDSGQNGAEDVIGVEDEE). Positions 63–72 (SSRGGSLRGS) are enriched in low complexity.

It in the N-terminal section; belongs to the glycosyltransferase 20 family. The protein in the C-terminal section; belongs to the gob-1 trehalose phosphatase family.

It carries out the reaction D-glucose 6-phosphate + UDP-alpha-D-glucose = alpha,alpha-trehalose 6-phosphate + UDP + H(+). Its function is as follows. Catalyzes the production of trehalose from glucose-6-phosphate and UDP-alpha-D-glucose in a 2 step process. The protein is Alpha,alpha-trehalose-phosphate synthase [UDP-forming] 1 (tps-1) of Aphelenchoides avenae (Mycophagous nematode worm).